Reading from the N-terminus, the 248-residue chain is Cell division protein FtsQ (248 aa).

The Cytoplasmic segment spans residues 1–4 (MGTR). The helical transmembrane segment at 5-25 (LRALLGVLILLVLGGAGWLFL) threads the bilayer. Residues 26–248 (RWEPTLLPIR…RVAARAGNRR (223 aa)) are Periplasmic-facing. A POTRA domain is found at 32–101 (LPIRLIQIEG…DTLRVQVREY (70 aa)).

Belongs to the FtsQ/DivIB family. FtsQ subfamily. In terms of assembly, part of a complex composed of FtsB, FtsL and FtsQ.

It is found in the cell inner membrane. Its function is as follows. Essential cell division protein. May link together the upstream cell division proteins, which are predominantly cytoplasmic, with the downstream cell division proteins, which are predominantly periplasmic. May control correct divisome assembly. This is Cell division protein FtsQ from Allochromatium vinosum (strain ATCC 17899 / DSM 180 / NBRC 103801 / NCIMB 10441 / D) (Chromatium vinosum).